The sequence spans 558 residues: Glucose-6-phosphate isomerase (558 aa).

Position 2 is an N-acetylalanine (alanine 2). An N6-acetyllysine modification is found at lysine 12. Lysine 34 carries the N6-(2-hydroxyisobutyryl)lysine modification. Phosphoserine is present on serine 107. The residue at position 109 (threonine 109) is a Phosphothreonine. The residue at position 142 (lysine 142) is an N6-acetyllysine. Residue 159–160 coordinates D-glucose 6-phosphate; sequence GS. Serine 185 is modified (phosphoserine; by CK2). Residue 210–215 participates in D-glucose 6-phosphate binding; sequence SKTFTT. Residue threonine 250 is modified to Phosphothreonine. Positions 354, 358, and 389 each coordinate D-glucose 6-phosphate. Residue glutamate 358 is the Proton donor of the active site. Histidine 389 is a catalytic residue. An N6-acetyllysine; alternate modification is found at lysine 454. Lysine 454 bears the N6-malonyllysine; alternate mark. An N6-succinyllysine; alternate modification is found at lysine 454. Serine 455 is modified (phosphoserine). Residue lysine 519 coordinates D-glucose 6-phosphate. Lysine 519 is an active-site residue.

This sequence belongs to the GPI family. Homodimer; in the catalytically active form. Monomer in the secreted form. Post-translationally, phosphorylation at Ser-185 by CK2 has been shown to decrease enzymatic activity and may contribute to secretion by a non-classical secretory pathway. ISGylated.

It localises to the cytoplasm. It is found in the secreted. It catalyses the reaction alpha-D-glucose 6-phosphate = beta-D-fructose 6-phosphate. It participates in carbohydrate degradation; glycolysis; D-glyceraldehyde 3-phosphate and glycerone phosphate from D-glucose: step 2/4. In the cytoplasm, catalyzes the conversion of glucose-6-phosphate to fructose-6-phosphate, the second step in glycolysis, and the reverse reaction during gluconeogenesis. Besides it's role as a glycolytic enzyme, also acts as a secreted cytokine: acts as an angiogenic factor (AMF) that stimulates endothelial cell motility. Acts as a neurotrophic factor, neuroleukin, for spinal and sensory neurons. It is secreted by lectin-stimulated T-cells and induces immunoglobulin secretion. The protein is Glucose-6-phosphate isomerase of Macaca fascicularis (Crab-eating macaque).